Consider the following 201-residue polypeptide: uncharacterized protein (201 aa).

The interval 121–141 is disordered; the sequence is HHRTRPGRGPGPRPGGSAMAG.

This is an uncharacterized protein from Mycobacterium tuberculosis (strain ATCC 25618 / H37Rv).